The sequence spans 61 residues: Small ribosomal subunit protein uS14 (61 aa).

Zn(2+) contacts are provided by cysteine 24, cysteine 27, cysteine 40, and cysteine 43.

The protein belongs to the universal ribosomal protein uS14 family. Zinc-binding uS14 subfamily. In terms of assembly, part of the 30S ribosomal subunit. Contacts proteins S3 and S10. The cofactor is Zn(2+).

In terms of biological role, binds 16S rRNA, required for the assembly of 30S particles and may also be responsible for determining the conformation of the 16S rRNA at the A site. This is Small ribosomal subunit protein uS14 from Deinococcus geothermalis (strain DSM 11300 / CIP 105573 / AG-3a).